Reading from the N-terminus, the 431-residue chain is Ubiquitin-like modifier-activating enzyme 5 (431 aa).

Glycine 92, aspartate 113, lysine 136, asparagine 159, and asparagine 197 together coordinate ATP. Zn(2+) contacts are provided by cysteine 239 and cysteine 242. Cysteine 263 (glycyl thioester intermediate) is an active-site residue. Zn(2+) contacts are provided by cysteine 316 and cysteine 321. The disordered stretch occupies residues 339-396 (AKAKMEADASTTIDEGPLHDDNEWNISVVDDENEKDTTKAASSSDTLPEGLTRELPVA).

It belongs to the ubiquitin-activating E1 family. UBA5 subfamily.

Its function is as follows. E1-like enzyme which activates UFM1. This Arabidopsis thaliana (Mouse-ear cress) protein is Ubiquitin-like modifier-activating enzyme 5.